The chain runs to 187 residues: Elongation factor P (187 aa).

It belongs to the elongation factor P family.

It is found in the cytoplasm. It functions in the pathway protein biosynthesis; polypeptide chain elongation. In terms of biological role, involved in peptide bond synthesis. Stimulates efficient translation and peptide-bond synthesis on native or reconstituted 70S ribosomes in vitro. Probably functions indirectly by altering the affinity of the ribosome for aminoacyl-tRNA, thus increasing their reactivity as acceptors for peptidyl transferase. This Prochlorococcus marinus (strain NATL2A) protein is Elongation factor P.